A 294-amino-acid chain; its full sequence is 2,4-diacetylphloroglucinol hydrolase (294 aa).

Residues His129, Glu160, His270, and Glu274 each contribute to the Zn(2+) site.

This sequence belongs to the DAPG/phloretin hydrolase family. In terms of assembly, homodimer. Zn(2+) serves as cofactor.

The catalysed reaction is 2,4-diacetylphloroglucinol + H2O = 2-acetylphloroglucinol + acetate. Specifically and significantly activated by CoCl(2). Competitively inhibited by MAPG, but not by 2-hydroxy- and 4-hydroxyacetophenone. Functionally, hydrolase that specifically degrades the potent antimicrobial compound 2,4-diacetylphloroglucinol (DAPG) to equimolar amounts of mildly toxic monoacetylphloroglucinol (MAPG) and acetate. This chain is 2,4-diacetylphloroglucinol hydrolase, found in Pseudomonas sp.